The primary structure comprises 368 residues: Probable endopolygalacturonase I (368 aa).

Residues 1–18 (MHSYQLLGLAAVGSLVSA) form the signal peptide. A propeptide spanning residues 19-31 (APAPSRVSEFAKK) is cleaved from the precursor. Cysteines 35 and 50 form a disulfide. 3 PbH1 repeats span residues 140–161 (VEDSTFKGINIKNTPVQAISVQ), 162–192 (ATNVHLNDFTIDNSDGDDNGGHNTDGFDISE), and 193–214 (STGVYISGATVKNQDDCIAINS). Aspartate 207 (proton donor) is an active-site residue. Cysteine 209 and cysteine 225 form a disulfide bridge. Histidine 229 is a catalytic residue. 3 PbH1 repeats span residues 244-265 (VKNVTISDSTVSNSANGVRIKT), 273-295 (VSEITYSNIQLSGITDYGIVIEQ), and 307-352 (STGI…DLSG). Residue asparagine 246 is glycosylated (N-linked (GlcNAc...) asparagine). 2 disulfides stabilise this stretch: cysteine 335–cysteine 340 and cysteine 359–cysteine 368.

The protein belongs to the glycosyl hydrolase 28 family.

The protein localises to the secreted. The enzyme catalyses (1,4-alpha-D-galacturonosyl)n+m + H2O = (1,4-alpha-D-galacturonosyl)n + (1,4-alpha-D-galacturonosyl)m.. Involved in maceration and soft-rotting of plant tissue. Hydrolyzes the 1,4-alpha glycosidic bonds of de-esterified pectate in the smooth region of the plant cell wall. The protein is Probable endopolygalacturonase I (pgaI) of Aspergillus niger (strain ATCC MYA-4892 / CBS 513.88 / FGSC A1513).